We begin with the raw amino-acid sequence, 1377 residues long: Zinc finger MYM-type protein 2 (1377 aa).

Glycyl lysine isopeptide (Lys-Gly) (interchain with G-Cter in SUMO2) cross-links involve residues Lys48, Lys88, Lys98, and Lys104. 2 stretches are compositionally biased toward polar residues: residues 85-115 (TSSKNEELQGNDSKITPSSKELASQKGSVSE) and 127-138 (TNQGQEKNSSNF). Positions 85–177 (TSSKNEELQG…GMGNSGITTE (93 aa)) are disordered. Positions 139 to 152 (IERRPPETKNRTND) are enriched in basic and acidic residues. A Glycyl lysine isopeptide (Lys-Gly) (interchain with G-Cter in SUMO2) cross-link involves residue Lys147. The segment covering 153–164 (VDFSTSSFSRSK) has biased composition (polar residues). Position 159 is a phosphoserine (Ser159). Residues Lys253 and Lys297 each participate in a glycyl lysine isopeptide (Lys-Gly) (interchain with G-Cter in SUMO2) cross-link. The disordered stretch occupies residues 273-305 (NGESATHHNPDSWISQSASFPRNQKQPGVDSLS). Polar residues predominate over residues 284-298 (SWISQSASFPRNQKQ). A Phosphoserine modification is found at Ser305. Residues Lys312, Lys325, Lys348, and Lys366 each participate in a glycyl lysine isopeptide (Lys-Gly) (interchain with G-Cter in SUMO2) cross-link. Residues 327 to 363 (VKVTCANCKKPLQKGQTAYQRKGSAHLFCSTTCLSSF) form an MYM-type 1 zinc finger. The MYM-type 2 zinc finger occupies 369–409 (PKKLCVMCKKDITTMKGTIVAQVDSSESFQEFCSTSCLSLY). Residues Lys417, Lys441, Lys491, Lys503, Lys513, Lys529, and Lys532 each participate in a glycyl lysine isopeptide (Lys-Gly) (interchain with G-Cter in SUMO2) cross-link. MYM-type zinc fingers lie at residues 421 to 456 (NKSRCTICGKLTEIRHEVSFKNMTHKLCSDHCFNRY) and 463 to 502 (IMNCCEQCGEYLPSKGAGNNVLVIDGQQKRFCCQSCVSEY). Residues 533–570 (LTTCTGCRTQCRFFDMTQCIGPNGYMEPYCSTACMNSH) form an MYM-type 5 zinc finger. Residues Lys576, Lys603, Lys649, Lys658, Lys688, Lys700, and Lys709 each participate in a glycyl lysine isopeptide (Lys-Gly) (interchain with G-Cter in SUMO2) cross-link. Residues 636-671 (QLKCNYCKNSFCSKPEILEWENKVHQFCSKTCSDDY) form an MYM-type 6 zinc finger. 2 MYM-type zinc fingers span residues 723–758 (RCVTCNYCSQLCKKGATKELDGVVRDFCSEDCCKKF) and 764–799 (KAARCDCCKSQGTLKERVQWRGEMKHFCDQHCLLRF). Residues Lys764, Lys788, Lys812, and Lys829 each participate in a glycyl lysine isopeptide (Lys-Gly) (interchain with G-Cter in SUMO2) cross-link. Phosphoserine is present on residues Ser838 and Ser958. Disordered stretches follow at residues 983–1002 (LLKNSDPETQSSMPDVPYEP) and 1028–1064 (VFGEEYEEQPRPRSKKKGAKRKAVSGYQSHDDSSDNS). The segment covering 1039-1050 (PRSKKKGAKRKA) has biased composition (basic residues). Position 1064 is a phosphoserine (Ser1064). Thr1376 carries the phosphothreonine modification.

As to quaternary structure, may be a component of a BHC histone deacetylase complex that contains HDAC1, HDAC2, HMG20B/BRAF35, KDM1A, RCOR1/CoREST, PHF21A/BHC80, ZNF198, ZNF217, ZMYM3, GSE1 and GTF2I.

The protein localises to the nucleus. Functionally, may function as a transcription factor. This chain is Zinc finger MYM-type protein 2 (ZMYM2), found in Pongo abelii (Sumatran orangutan).